The following is a 446-amino-acid chain: Serine decarboxylase 3 (446 aa).

Substrate is bound at residue histidine 162. N6-(pyridoxal phosphate)lysine is present on lysine 274.

This sequence belongs to the group II decarboxylase family. Pyridoxal 5'-phosphate serves as cofactor.

The catalysed reaction is L-serine + H(+) = ethanolamine + CO2. Functionally, catalyzes the biosynthesis of ethanolamine from serine. Decarboxylation of free serine is the major source of ethanolamine production in plants and ethanolamine metabolism is crucial for the synthesis of choline, phosphatidylethanolamine (PE) and phosphatidylcholine (PC), and thus for plant growth. The protein is Serine decarboxylase 3 of Oryza sativa subsp. japonica (Rice).